We begin with the raw amino-acid sequence, 429 residues long: Enolase (429 aa).

Residue glutamine 169 coordinates (2R)-2-phosphoglycerate. The Proton donor role is filled by glutamate 211. The Mg(2+) site is built by aspartate 248, glutamate 289, and aspartate 316. 4 residues coordinate (2R)-2-phosphoglycerate: lysine 341, arginine 370, serine 371, and lysine 392. Catalysis depends on lysine 341, which acts as the Proton acceptor.

The protein belongs to the enolase family. Mg(2+) is required as a cofactor.

The protein resides in the cytoplasm. The protein localises to the secreted. Its subcellular location is the cell surface. It catalyses the reaction (2R)-2-phosphoglycerate = phosphoenolpyruvate + H2O. Its pathway is carbohydrate degradation; glycolysis; pyruvate from D-glyceraldehyde 3-phosphate: step 4/5. Its function is as follows. Catalyzes the reversible conversion of 2-phosphoglycerate (2-PG) into phosphoenolpyruvate (PEP). It is essential for the degradation of carbohydrates via glycolysis. In Anaplasma phagocytophilum (strain HZ), this protein is Enolase.